Reading from the N-terminus, the 128-residue chain is uncharacterized protein (128 aa).

The next 3 membrane-spanning stretches (helical) occupy residues 30–50 (ILFTILSVAIIMVAFDSLGSS), 65–85 (VFRGNTAKGIAVVGIIVLGIQ), and 93–113 (WEVALVVVTAIIILFKAPDIV).

It is found in the cell membrane. This is an uncharacterized protein from Rickettsia prowazekii (strain Madrid E).